The following is a 284-amino-acid chain: NADH-cytochrome b5 reductase 1 (284 aa).

Residues Pro-8–Phe-28 traverse the membrane as a helical segment. An FAD-binding FR-type domain is found at Asn-41–Thr-144. FAD-binding positions include Glu-124–Gly-139 and Ser-150–Leu-182.

This sequence belongs to the flavoprotein pyridine nucleotide cytochrome reductase family. In terms of assembly, monomer. Component of the 2-(3-amino-3-carboxypropyl)histidine synthase complex composed of DPH1, DPH2, DPH3 and a NADH-dependent reductase, predominantly CBR1. FAD serves as cofactor.

The protein localises to the mitochondrion outer membrane. It carries out the reaction 2 Fe(III)-[cytochrome b5] + NADH = 2 Fe(II)-[cytochrome b5] + NAD(+) + H(+). It catalyses the reaction 2 Fe(3+)-[Dph3] + NADH = 2 Fe(2+)-[Dph3] + NAD(+) + H(+). It participates in protein modification; peptidyl-diphthamide biosynthesis. Functionally, NADH-dependent reductase for DPH3 and cytochrome b5. Required for the first step of diphthamide biosynthesis, a post-translational modification of histidine which occurs in elongation factor 2. DPH1 and DPH2 transfer a 3-amino-3-carboxypropyl (ACP) group from S-adenosyl-L-methionine (SAM) to a histidine residue, the reaction is assisted by a reduction system comprising DPH3 and a NADH-dependent reductase, predominantly CBR1. By reducing DPH3, also involved in the formation of the tRNA wobble base modification mcm5s 2U (5-methoxycarbonylmethyl-2-thiouridine), mediated by the elongator complex. The cytochrome b5/NADH cytochrome b5 reductase electron transfer system supports the catalytic activity of several sterol biosynthetic enzymes. The protein is NADH-cytochrome b5 reductase 1 (CBR1) of Debaryomyces hansenii (strain ATCC 36239 / CBS 767 / BCRC 21394 / JCM 1990 / NBRC 0083 / IGC 2968) (Yeast).